Reading from the N-terminus, the 666-residue chain is Long chain acyl-CoA synthetase 5 (666 aa).

228–239 provides a ligand contact to ATP; it reads IMYTSGTTGDPK. Positions 495-519 are fatty acid-binding; it reads DGWLHTGDVGEWQPNGSMKIIDRKK.

It belongs to the ATP-dependent AMP-binding enzyme family. It depends on Mg(2+) as a cofactor.

The enzyme catalyses a long-chain fatty acid + ATP + CoA = a long-chain fatty acyl-CoA + AMP + diphosphate. It participates in lipid metabolism; fatty acid metabolism. Its function is as follows. Activation of long-chain fatty acids for both synthesis of cellular lipids, and degradation via beta-oxidation. Preferentially uses palmitate, palmitoleate, oleate and linoleate. The protein is Long chain acyl-CoA synthetase 5 (LACS5) of Arabidopsis thaliana (Mouse-ear cress).